The following is a 325-amino-acid chain: NADH-quinone oxidoreductase subunit H (325 aa).

9 helical membrane-spanning segments follow: residues 11 to 31, 50 to 69, 81 to 101, 114 to 134, 154 to 174, 186 to 206, 237 to 257, 265 to 285, and 304 to 324; these read ILLS…CGAF, NRVG…KMFF, VIFT…FAIV, IGIL…LFAG, VSYE…AGSF, LWNV…GVAV, FFVG…TLFF, LPPF…FILI, and VCLP…LWQA.

This sequence belongs to the complex I subunit 1 family. NDH-1 is composed of 13 different subunits. Subunits NuoA, H, J, K, L, M, N constitute the membrane sector of the complex.

The protein resides in the cell inner membrane. It catalyses the reaction a quinone + NADH + 5 H(+)(in) = a quinol + NAD(+) + 4 H(+)(out). Its function is as follows. NDH-1 shuttles electrons from NADH, via FMN and iron-sulfur (Fe-S) centers, to quinones in the respiratory chain. The immediate electron acceptor for the enzyme in this species is believed to be ubiquinone. Couples the redox reaction to proton translocation (for every two electrons transferred, four hydrogen ions are translocated across the cytoplasmic membrane), and thus conserves the redox energy in a proton gradient. This subunit may bind ubiquinone. This chain is NADH-quinone oxidoreductase subunit H, found in Salmonella agona (strain SL483).